We begin with the raw amino-acid sequence, 574 residues long: Sodium/hydrogen exchanger 8 (574 aa).

Transmembrane regions (helical) follow at residues 53–73, 77–97, 116–136, 149–169, 184–204, 254–274, 304–324, 347–367, 373–393, 410–430, and 444–464; these read MTIF…HLLI, LHFL…GAFI, PNMF…YSLH, LFSV…IYFL, FAFG…IFNA, LGYF…TGLI, GLAE…GIVM, VAFM…FSFP, SFVI…IFPL, MFIM…SLHL, and TTII…MPLI.

It belongs to the monovalent cation:proton antiporter 1 (CPA1) transporter (TC 2.A.36) family.

Its subcellular location is the golgi apparatus membrane. Its function is as follows. Involved in pH regulation to eliminate acids generated by active metabolism or to counter adverse environmental conditions. Major proton extruding system driven by the inward sodium ion chemical gradient. Plays an important role in signal transduction. This Gallus gallus (Chicken) protein is Sodium/hydrogen exchanger 8.